The primary structure comprises 530 residues: Glucose-6-phosphate isomerase (530 aa).

The Proton donor role is filled by glutamate 322. Active-site residues include histidine 351 and lysine 455.

It belongs to the GPI family.

The protein localises to the cytoplasm. The enzyme catalyses alpha-D-glucose 6-phosphate = beta-D-fructose 6-phosphate. It functions in the pathway carbohydrate biosynthesis; gluconeogenesis. The protein operates within carbohydrate degradation; glycolysis; D-glyceraldehyde 3-phosphate and glycerone phosphate from D-glucose: step 2/4. Catalyzes the reversible isomerization of glucose-6-phosphate to fructose-6-phosphate. The protein is Glucose-6-phosphate isomerase of Geobacter sp. (strain M21).